The sequence spans 450 residues: Plasmepsin VII (450 aa).

Positions 1–24 (MNKNIIQIYLFVFILLLKQHIVIL) are cleaved as a signal peptide. Residues 92 to 441 (YYGEVQIGEQ…DKDNLKIGFV (350 aa)) enclose the Peptidase A1 domain. Active-site residues include Asp111 and Asp324.

Belongs to the peptidase A1 family.

The protein localises to the cytoplasm. In Plasmodium falciparum (isolate NF54), this protein is Plasmepsin VII.